Here is a 174-residue protein sequence, read N- to C-terminus: Adenine phosphoribosyltransferase (174 aa).

Belongs to the purine/pyrimidine phosphoribosyltransferase family. As to quaternary structure, homodimer.

Its subcellular location is the cytoplasm. It catalyses the reaction AMP + diphosphate = 5-phospho-alpha-D-ribose 1-diphosphate + adenine. The protein operates within purine metabolism; AMP biosynthesis via salvage pathway; AMP from adenine: step 1/1. Its function is as follows. Catalyzes a salvage reaction resulting in the formation of AMP, that is energically less costly than de novo synthesis. The protein is Adenine phosphoribosyltransferase of Nitrosomonas eutropha (strain DSM 101675 / C91 / Nm57).